A 299-amino-acid polypeptide reads, in one-letter code: Deoxyribonuclease-1-like 2 (299 aa).

A signal peptide spans 1 to 20 (MGGPRALLAALWALEAAGTA). Residues Glu99 and His170 contribute to the active site. A disulfide bridge connects residues Cys209 and Cys245.

It belongs to the DNase I family. It depends on Mg(2+) as a cofactor. Ca(2+) is required as a cofactor. As to expression, preferentially expressed in the skin and up-regulated during keratinocytes differentiation. Highly abundant (at protein level) in the stratum granulosum.

Its subcellular location is the cytoplasm. The protein localises to the secreted. Divalent cation-dependent acid DNA endonuclease involved in the breakdown of the nucleus during corneocyte formation of epidermal keratinocytes. May play an immune role by eliminating harmful DNA released into the extracellular environment by damaged epidermal cells. This Homo sapiens (Human) protein is Deoxyribonuclease-1-like 2 (DNASE1L2).